A 439-amino-acid chain; its full sequence is Glucose-1-phosphate adenylyltransferase (439 aa).

Residues Y116, G182, 197–198, and S215 contribute to the alpha-D-glucose 1-phosphate site; that span reads EK.

The protein belongs to the bacterial/plant glucose-1-phosphate adenylyltransferase family. Homotetramer.

It catalyses the reaction alpha-D-glucose 1-phosphate + ATP + H(+) = ADP-alpha-D-glucose + diphosphate. The protein operates within glycan biosynthesis; glycogen biosynthesis. Its function is as follows. Involved in the biosynthesis of ADP-glucose, a building block required for the elongation reactions to produce glycogen. Catalyzes the reaction between ATP and alpha-D-glucose 1-phosphate (G1P) to produce pyrophosphate and ADP-Glc. This Pasteurella multocida (strain Pm70) protein is Glucose-1-phosphate adenylyltransferase.